The primary structure comprises 440 residues: Ribosomal protein uS12 methylthiotransferase RimO (440 aa).

Positions 1-117 (MKVHLTSLGC…VIEAVAGKES (117 aa)) constitute an MTTase N-terminal domain. [4Fe-4S] cluster-binding residues include cysteine 10, cysteine 46, cysteine 80, cysteine 155, cysteine 159, and cysteine 162. Residues 141–371 (CATPHTVYVK…MTAQIDISSR (231 aa)) form the Radical SAM core domain. One can recognise a TRAM domain in the interval 374-440 (AKRVGSREPV…SAYDLTGEAQ (67 aa)).

This sequence belongs to the methylthiotransferase family. RimO subfamily. The cofactor is [4Fe-4S] cluster.

It is found in the cytoplasm. It carries out the reaction L-aspartate(89)-[ribosomal protein uS12]-hydrogen + (sulfur carrier)-SH + AH2 + 2 S-adenosyl-L-methionine = 3-methylsulfanyl-L-aspartate(89)-[ribosomal protein uS12]-hydrogen + (sulfur carrier)-H + 5'-deoxyadenosine + L-methionine + A + S-adenosyl-L-homocysteine + 2 H(+). Functionally, catalyzes the methylthiolation of an aspartic acid residue of ribosomal protein uS12. The protein is Ribosomal protein uS12 methylthiotransferase RimO of Desulfosudis oleivorans (strain DSM 6200 / JCM 39069 / Hxd3) (Desulfococcus oleovorans).